The following is a 293-amino-acid chain: Probable endoribonuclease YicC (293 aa).

The protein belongs to the YicC/YloC family. A divalent metal cation serves as cofactor.

Functionally, negatively modulates sporulation, probably in response to nutrient conditions. Effects expression of sporulation regulator spo0A in an indirect manner, possibly via repression of the sinRR' operon. Probably a ssRNA endonuclease. In terms of biological role, might contribute to small RNA (sRNA) regulation. In Clostridioides difficile (strain 630) (Peptoclostridium difficile), this protein is Probable endoribonuclease YicC.